We begin with the raw amino-acid sequence, 430 residues long: Dihydrolipoyllysine-residue acetyltransferase component of pyruvate dehydrogenase complex (430 aa).

A Lipoyl-binding domain is found at 2-77 (AFEFRLPDIG…VVGDVIVKID (76 aa)). Residue Lys-43 is modified to N6-lipoyllysine. The tract at residues 80–122 (DAEDMQFKGHDDDSSSKEEPAKEEAPAEQAPVATQTEEVDENR) is disordered. Residues 84–104 (MQFKGHDDDSSSKEEPAKEEA) are compositionally biased toward basic and acidic residues. Positions 125–162 (KAMPSVRKYAREKGVNIKAVSGSGKNGRITKEDVDAYL) constitute a Peripheral subunit-binding (PSBD) domain. The tract at residues 165 to 199 (GAPTASNESAASATNEEVAETPAAPAAVSLEGDFP) is disordered. The segment covering 168 to 192 (TASNESAASATNEEVAETPAAPAAV) has biased composition (low complexity). The active site involves His-401.

The protein belongs to the 2-oxoacid dehydrogenase family. As to quaternary structure, forms a 24-polypeptide structural core with octahedral symmetry. Requires (R)-lipoate as cofactor.

The enzyme catalyses N(6)-[(R)-dihydrolipoyl]-L-lysyl-[protein] + acetyl-CoA = N(6)-[(R)-S(8)-acetyldihydrolipoyl]-L-lysyl-[protein] + CoA. In terms of biological role, the pyruvate dehydrogenase complex catalyzes the overall conversion of pyruvate to acetyl-CoA and CO(2). It contains multiple copies of three enzymatic components: pyruvate dehydrogenase (E1), dihydrolipoamide acetyltransferase (E2) and lipoamide dehydrogenase (E3). This is Dihydrolipoyllysine-residue acetyltransferase component of pyruvate dehydrogenase complex (pdhC) from Staphylococcus aureus (strain MRSA252).